Consider the following 251-residue polypeptide: 3-dehydroquinate dehydratase (251 aa).

Residues 47-49 (EWR) and arginine 83 each bind 3-dehydroquinate. Histidine 144 serves as the catalytic Proton donor/acceptor. Catalysis depends on lysine 171, which acts as the Schiff-base intermediate with substrate. Residues arginine 214, serine 233, and glutamine 237 each coordinate 3-dehydroquinate.

Belongs to the type-I 3-dehydroquinase family. As to quaternary structure, homodimer.

The catalysed reaction is 3-dehydroquinate = 3-dehydroshikimate + H2O. Its pathway is metabolic intermediate biosynthesis; chorismate biosynthesis; chorismate from D-erythrose 4-phosphate and phosphoenolpyruvate: step 3/7. Its function is as follows. Involved in the third step of the chorismate pathway, which leads to the biosynthesis of aromatic amino acids. Catalyzes the cis-dehydration of 3-dehydroquinate (DHQ) and introduces the first double bond of the aromatic ring to yield 3-dehydroshikimate. This chain is 3-dehydroquinate dehydratase, found in Klebsiella pneumoniae subsp. pneumoniae (strain ATCC 700721 / MGH 78578).